Consider the following 456-residue polypeptide: Bifunctional protein GlmU (456 aa).

A pyrophosphorylase region spans residues Met1–Arg229. UDP-N-acetyl-alpha-D-glucosamine is bound by residues Leu11–Gly14, Lys25, Gln76, Gly81–Thr82, Tyr103–Asp105, Gly140, Glu154, Asn169, and Asn227. Asp105 serves as a coordination point for Mg(2+). Asn227 lines the Mg(2+) pocket. The linker stretch occupies residues Leu230–Ala250. Residues Gly251–Lys456 are N-acetyltransferase. UDP-N-acetyl-alpha-D-glucosamine is bound by residues Arg333 and Lys351. His363 functions as the Proton acceptor in the catalytic mechanism. Residues Tyr366 and Asn377 each coordinate UDP-N-acetyl-alpha-D-glucosamine. Acetyl-CoA contacts are provided by residues Ala380, Asn386 to Tyr387, Ser405, Ala423, and Arg440.

This sequence in the N-terminal section; belongs to the N-acetylglucosamine-1-phosphate uridyltransferase family. In the C-terminal section; belongs to the transferase hexapeptide repeat family. As to quaternary structure, homotrimer. It depends on Mg(2+) as a cofactor.

The protein localises to the cytoplasm. It carries out the reaction alpha-D-glucosamine 1-phosphate + acetyl-CoA = N-acetyl-alpha-D-glucosamine 1-phosphate + CoA + H(+). It catalyses the reaction N-acetyl-alpha-D-glucosamine 1-phosphate + UTP + H(+) = UDP-N-acetyl-alpha-D-glucosamine + diphosphate. Its pathway is nucleotide-sugar biosynthesis; UDP-N-acetyl-alpha-D-glucosamine biosynthesis; N-acetyl-alpha-D-glucosamine 1-phosphate from alpha-D-glucosamine 6-phosphate (route II): step 2/2. It functions in the pathway nucleotide-sugar biosynthesis; UDP-N-acetyl-alpha-D-glucosamine biosynthesis; UDP-N-acetyl-alpha-D-glucosamine from N-acetyl-alpha-D-glucosamine 1-phosphate: step 1/1. The protein operates within bacterial outer membrane biogenesis; LPS lipid A biosynthesis. Its function is as follows. Catalyzes the last two sequential reactions in the de novo biosynthetic pathway for UDP-N-acetylglucosamine (UDP-GlcNAc). The C-terminal domain catalyzes the transfer of acetyl group from acetyl coenzyme A to glucosamine-1-phosphate (GlcN-1-P) to produce N-acetylglucosamine-1-phosphate (GlcNAc-1-P), which is converted into UDP-GlcNAc by the transfer of uridine 5-monophosphate (from uridine 5-triphosphate), a reaction catalyzed by the N-terminal domain. The chain is Bifunctional protein GlmU from Shigella dysenteriae serotype 1 (strain Sd197).